The chain runs to 631 residues: DNA ligase (631 aa).

Residues 37–41 and 79–80 each bind NAD(+); these read DAHYD and ST. Lys-115 serves as the catalytic N6-AMP-lysine intermediate. NAD(+) is bound by residues Arg-131, Glu-160, and Lys-272. Zn(2+)-binding residues include Cys-361, Cys-364, Cys-377, and Cys-382. The BRCT domain occupies 539–630; sequence DVSSPISGKG…SQSSPEQMSL (92 aa).

Belongs to the NAD-dependent DNA ligase family. LigA subfamily. Requires Mg(2+) as cofactor. The cofactor is Mn(2+).

It carries out the reaction NAD(+) + (deoxyribonucleotide)n-3'-hydroxyl + 5'-phospho-(deoxyribonucleotide)m = (deoxyribonucleotide)n+m + AMP + beta-nicotinamide D-nucleotide.. Functionally, DNA ligase that catalyzes the formation of phosphodiester linkages between 5'-phosphoryl and 3'-hydroxyl groups in double-stranded DNA using NAD as a coenzyme and as the energy source for the reaction. It is essential for DNA replication and repair of damaged DNA. This chain is DNA ligase, found in Desulfatibacillum aliphaticivorans.